The following is a 451-amino-acid chain: MKDEQLYYFEKSPVFKAMMHFSLPMMIGTLLSVIYGILNIYFIGFLEDSHMISAISLTLPVFAILMGLGNLFGVGAGTYISRLLGAKDYSKSKFVSSFSIYGGIALGLIVILVTLPFSDQIAAILGARGETLALTSNYLKVMFLSAPFVILFFILEQFARAIGAPMISMIGMLASVGLNIILDPILIFGFDLNVVGAALGTAISNVAAALFFIVYFMKNSDVVSVNIKLAKPNKEMLSEIFKIGIPAFLMSILMGFTGLVLNLFLAHYGNFAIASYGISFRLVQFPELIIMGLCEGVVPLIAYNFMANKGRMKDVIKAVIMSIGVIFVVCMIAVFTIGHHMVGLFTTDQDIVEMATFILKVTMTSLLLNGIGFLFTGMLQATGQGRGATIMAILQGAIIIPVLFIMNALFGLTGVIWSLLIAESLCALAAMLIVYLLRDRLTVDTSELIEG.

12 helical membrane passes run methionine 26–leucine 46, alanine 54–valine 74, serine 97–phenylalanine 117, leucine 139–alanine 159, isoleucine 170–phenylalanine 190, valine 194–valine 214, isoleucine 245–leucine 265, leucine 282–alanine 302, alanine 318–glycine 338, alanine 355–phenylalanine 375, alanine 397–tryptophan 417, and serine 418–arginine 438.

It belongs to the multi antimicrobial extrusion (MATE) (TC 2.A.66.1) family. MepA subfamily.

It is found in the cell membrane. In terms of biological role, multidrug resistance efflux protein. In Staphylococcus aureus (strain MSSA476), this protein is Multidrug export protein MepA (mepA).